The primary structure comprises 117 residues: Acidic phospholipase A2 PA-1G (117 aa).

7 cysteine pairs are disulfide-bonded: Cys-11–Cys-71, Cys-27–Cys-117, Cys-29–Cys-45, Cys-44–Cys-98, Cys-51–Cys-91, Cys-60–Cys-84, and Cys-78–Cys-89. 3 residues coordinate Ca(2+): Tyr-28, Gly-30, and Gly-32. The active site involves His-48. Asp-49 contacts Ca(2+). Asp-92 is a catalytic residue.

It belongs to the phospholipase A2 family. Group I subfamily. D49 sub-subfamily. Ca(2+) serves as cofactor. Expressed by the venom gland.

Its subcellular location is the secreted. It carries out the reaction a 1,2-diacyl-sn-glycero-3-phosphocholine + H2O = a 1-acyl-sn-glycero-3-phosphocholine + a fatty acid + H(+). Its function is as follows. PLA2 catalyzes the calcium-dependent hydrolysis of the 2-acyl groups in 3-sn-phosphoglycerides. The protein is Acidic phospholipase A2 PA-1G of Pseudechis australis (Mulga snake).